A 574-amino-acid polypeptide reads, in one-letter code: Squalene monooxygenase (574 aa).

Topologically, residues 1–20 (MWTFLGIATFTYFYKKFGDF) are cytoplasmic. An interaction with MARCHF6 region spans residues 1-100 (MWTFLGIATF…EQLEARRRRK (100 aa)). An intramembrane segment occupies 21-41 (ITLANREVLLCVLVFLSLGLV). Residues 42 to 574 (LSYRCRHRNG…IYSEMKYMVH (533 aa)) lie on the Cytoplasmic side of the membrane. The interval 62-73 (QFALFSDILSGL) is required for degradation in response to high membrane cholesterol levels. The tract at residues 118–574 (TSSQNDPEVI…IYSEMKYMVH (457 aa)) is sufficient for enzyme activity. Residues 133 to 134 (VL), 153 to 154 (ER), arginine 161, phenylalanine 166, arginine 234, valine 250, aspartate 408, and methionine 421 contribute to the FAD site. A hydrophobic; mediates interaction with membranes region spans residues 516–574 (PLVLIGHFFAVAIYAVYFCFKSEPWITKPRALLSSGAVLYKACSVIFPLIYSEMKYMVH).

It belongs to the squalene monooxygenase family. Interacts (via N-terminal domain) with MARCHF6. Interacts with SMIM22; this interaction modulates lipid droplet formation. FAD serves as cofactor. Ubiquitinated by MARCHF6 in response to high cholesterol levels in intracellular membranes, leading to proteasomal degradation. In terms of tissue distribution, detected in liver (at protein level).

The protein localises to the microsome membrane. It localises to the endoplasmic reticulum membrane. The enzyme catalyses squalene + reduced [NADPH--hemoprotein reductase] + O2 = (S)-2,3-epoxysqualene + oxidized [NADPH--hemoprotein reductase] + H2O + H(+). The protein operates within terpene metabolism; lanosterol biosynthesis; lanosterol from farnesyl diphosphate: step 2/3. With respect to regulation, inhibited by NB-598 ((E)N-ethyl-N-(6,6-dimethyl-2-hepten-4-ynyl)-3-[(3,3'-bi-thiophen-5-yl)methoxy]benzene-methanamine). Contrary to fungal enzymes, the mammalian enzyme is only slightly inhibited by terbinafine. Inhibited by tellurite, tellurium dioxide, selenite, and selenium dioxide. Catalyzes the stereospecific oxidation of squalene to (S)-2,3-epoxysqualene, and is considered to be a rate-limiting enzyme in steroid biosynthesis. This is Squalene monooxygenase (SQLE) from Homo sapiens (Human).